The following is a 591-amino-acid chain: Glycoprotein (591 aa).

An N-terminal signal peptide occupies residues 1–21; sequence MSLIHLIYFPTILSLILGTEG. Residues 22–552 lie on the Virion surface side of the membrane; that stretch reads TPALTYGNLA…TLEESVKRYL (531 aa). Residues 553-573 form a helical membrane-spanning segment; it reads TVAFGLVLTVITIWAMSKLFF. Topologically, residues 574–591 are intravirion; the sequence is RSSPTYARAPTNIEWVRS.

It belongs to the nucleorhabdovirus glycoprotein family. As to quaternary structure, homotrimer. Interacts with matrix protein. Post-translationally, glycosylatedby host. Glycosylation is crucial for glycoprotein export at the cell surface.

The protein resides in the virion membrane. Its function is as follows. Attaches the virus to host cellular receptor, inducing endocytosis of the virion. In the endosome, the acidic pH induces conformational changes in the glycoprotein trimer, which trigger fusion between virus and cell membrane. The polypeptide is Glycoprotein (G) (Rottboellia (Sorghum)).